The sequence spans 381 residues: DnaJ-related protein spj1 (381 aa).

Residues 5-74 (NFSQKQILGV…RKIYDAYGEE (70 aa)) enclose the J domain. The segment at 72–93 (GEEGLNGQPGGPGGGPGEGFPG) is disordered. Residues 78–93 (GQPGGPGGGPGEGFPG) show a composition bias toward gly residues. A CR-type zinc finger spans residues 138-225 (GGSFTLEIPV…CKGERVAEVV (88 aa)). CXXCXGXG motif repeat units follow at residues 151 to 158 (CSVCSGQG), 172 to 179 (CPVCGGSG), 199 to 206 (CNACNGNG), and 213 to 220 (CPRCKGER). The Prevents secretion from ER motif lies at 378 to 381 (FDEL).

It localises to the endoplasmic reticulum. This is DnaJ-related protein spj1 (spj1) from Schizosaccharomyces pombe (strain 972 / ATCC 24843) (Fission yeast).